The chain runs to 97 residues: Co-chaperonin GroES (97 aa).

It belongs to the GroES chaperonin family. As to quaternary structure, heptamer of 7 subunits arranged in a ring. Interacts with the chaperonin GroEL.

It localises to the cytoplasm. In terms of biological role, together with the chaperonin GroEL, plays an essential role in assisting protein folding. The GroEL-GroES system forms a nano-cage that allows encapsulation of the non-native substrate proteins and provides a physical environment optimized to promote and accelerate protein folding. GroES binds to the apical surface of the GroEL ring, thereby capping the opening of the GroEL channel. The sequence is that of Co-chaperonin GroES from Elusimicrobium minutum (strain Pei191).